The following is a 592-amino-acid chain: V-type ATP synthase alpha chain (592 aa).

232–239 (GPFGAGKT) contributes to the ATP binding site.

Belongs to the ATPase alpha/beta chains family.

The enzyme catalyses ATP + H2O + 4 H(+)(in) = ADP + phosphate + 5 H(+)(out). In terms of biological role, produces ATP from ADP in the presence of a proton gradient across the membrane. The V-type alpha chain is a catalytic subunit. The protein is V-type ATP synthase alpha chain of Clostridium botulinum (strain Eklund 17B / Type B).